A 162-amino-acid chain; its full sequence is Caveolin-2 (162 aa).

Over 1-86 the chain is Cytoplasmic; that stretch reads MGLETEKADV…FEISKYIIYK (86 aa). Tyr-19 carries the phosphotyrosine; by SRC modification. Phosphoserine is present on residues Ser-20 and Ser-23. Tyr-27 is modified (phosphotyrosine; by SRC). Residues 87–107 constitute an intramembrane region (helical); it reads FLTVFLAIPLAFAAGILFATL. The Cytoplasmic portion of the chain corresponds to 108–162; the sequence is SCLHIWITMPFVKTCLMVLPSVQTIWKSVTDVAIAPLCTSVGRSFSSVSLQLSHD.

The protein belongs to the caveolin family. In terms of assembly, monomer or homodimer. Interacts with CAV1; the interaction forms a stable heterooligomeric complex that is required for targeting to lipid rafts and for caveolae formation. Tyrosine phosphorylated forms do not form heterooligomers with the Tyr-19-phosphorylated form existing as a monomer or dimer, and the Tyr-27-form as a monomer only. Interacts (tyrosine phosphorylated form) with the SH2 domain-containing proteins, RASA1, NCK1 and SRC. Interacts (tyrosine phosphorylated form) with INSR, the interaction (Tyr-27-phosphorylated form) is increased on insulin stimulation. Interacts (Tyr-19 phosphorylated form) with MAPK1 (phosphorylated form); the interaction, promoted by insulin, leads to nuclear location and MAPK1 activation. Interacts with STAT3; the interaction is increased on insulin-induced tyrosine phosphorylation leading to STAT activation. Post-translationally, phosphorylated on serine and tyrosine residues. CAV1 promotes phosphorylation on Ser-23 which then targets the complex to the plasma membrane, lipid rafts and caveolae. Phosphorylation on both Tyr-19 and Tyr-27 is required for insulin-induced 'Ser-727' phosphorylation of STAT3 and its activation. Phosphorylation on Tyr-19 is required for insulin-induced phosphorylation of MAPK1 and DNA binding of STAT3. Tyrosine phosphorylation is induced by both EGF and insulin.

It is found in the nucleus. Its subcellular location is the cytoplasm. The protein resides in the golgi apparatus membrane. The protein localises to the cell membrane. It localises to the membrane. It is found in the caveola. In terms of biological role, may act as a scaffolding protein within caveolar membranes. Interacts directly with G-protein alpha subunits and can functionally regulate their activity. Acts as an accessory protein in conjunction with CAV1 in targeting to lipid rafts and driving caveolae formation. Positive regulator of cellular mitogenesis of the MAPK signaling pathway. Required for the insulin-stimulated nuclear translocation and activation of MAPK1 and STAT3, and the subsequent regulation of cell cycle progression. This Dasypus novemcinctus (Nine-banded armadillo) protein is Caveolin-2 (CAV2).